The chain runs to 235 residues: tRNA (guanine-N(1)-)-methyltransferase (235 aa).

Residues G112 and 131 to 136 (LGDFVL) each bind S-adenosyl-L-methionine.

Belongs to the RNA methyltransferase TrmD family. Homodimer.

The protein resides in the cytoplasm. It carries out the reaction guanosine(37) in tRNA + S-adenosyl-L-methionine = N(1)-methylguanosine(37) in tRNA + S-adenosyl-L-homocysteine + H(+). Specifically methylates guanosine-37 in various tRNAs. The chain is tRNA (guanine-N(1)-)-methyltransferase from Synechococcus elongatus (strain ATCC 33912 / PCC 7942 / FACHB-805) (Anacystis nidulans R2).